The sequence spans 569 residues: Ribosome-inactivating protein SNAI' (569 aa).

An N-terminal signal peptide occupies residues 1 to 28; it reads MKVVATILYLVVLAICGLGIHGAHPTHS. N-linked (GlcNAc...) asparagine glycosylation occurs at Asn40. Glu201 is a catalytic residue. 3 disulfides stabilise this stretch: Cys286–Cys311, Cys328–Cys347, and Cys369–Cys381. Ricin B-type lectin domains follow at residues 315–435 and 437–565; these read EEVT…WIVG and VEPL…WIAS. The 1-alpha repeat unit spans residues 325 to 365; sequence DGFCAEVKNGDEKDGTPVQLSSCGEQSNQQWTFSTDGTIQS. Residues 366–401 form a 1-beta repeat; the sequence is LGKCLTTSSSVMIYNCKVVPPESTKWVVSIDGTITN. The 1-gamma repeat unit spans residues 404-436; it reads SGLVLTAPKAAEGTLVSLEKNVHAARQGWIVGN. The 2-alpha repeat unit spans residues 448–488; the sequence is EQMCLETNPGNNDVSLGDCSVKSASKVDQKWALYGDGTIRV. Disulfide bonds link Cys451-Cys466 and Cys495-Cys512. A 2-beta repeat occupies 492 to 530; sequence RSLCVTSEGKSSNEPIIILKCLGWANQRWVFNTDGTISN. The 2-gamma repeat unit spans residues 533–566; sequence SKLVMHVDQNDVPLRKIILSHPSGTSNQQWIAST.

It in the N-terminal section; belongs to the ribosome-inactivating protein family. Type 2 RIP subfamily. As to quaternary structure, disulfide-linked dimer of A and B chains.

It catalyses the reaction Endohydrolysis of the N-glycosidic bond at one specific adenosine on the 28S rRNA.. Functionally, the A chain is responsible for inhibiting protein synthesis through the catalytic inactivation of 60S ribosomal subunits by removing adenine from position 4,324 of 28S rRNA. The B chain binds to cell receptors and probably facilitates the entry into the cell of the A chain; B chains are also responsible for cell agglutination (lectin activity). Agglutination is inhibited by Neu5Ac(alpha2,6)lactose, and N-linked glycoproteins such as fetuin and orosomucoid. This is Ribosome-inactivating protein SNAI' from Sambucus nigra (European elder).